The chain runs to 194 residues: Imidazoleglycerol-phosphate dehydratase (194 aa).

The protein belongs to the imidazoleglycerol-phosphate dehydratase family.

It localises to the cytoplasm. It catalyses the reaction D-erythro-1-(imidazol-4-yl)glycerol 3-phosphate = 3-(imidazol-4-yl)-2-oxopropyl phosphate + H2O. Its pathway is amino-acid biosynthesis; L-histidine biosynthesis; L-histidine from 5-phospho-alpha-D-ribose 1-diphosphate: step 6/9. The chain is Imidazoleglycerol-phosphate dehydratase from Caldicellulosiruptor bescii (strain ATCC BAA-1888 / DSM 6725 / KCTC 15123 / Z-1320) (Anaerocellum thermophilum).